The following is a 1006-amino-acid chain: Probable protein phosphatase DDB_G0279461 (1006 aa).

Residues 1–12 (MMVPSLSTSISS) show a composition bias toward polar residues. Disordered regions lie at residues 1 to 119 (MMVP…NNKE), 146 to 188 (SHAS…RSNS), 214 to 269 (SSED…NGIR), 312 to 387 (DAES…PPNQ), 459 to 513 (NINN…NNIQ), 525 to 563 (DYNI…NSKF), and 604 to 642 (GSIP…TSAS). Residues 59-69 (NEEEGTADNEL) are compositionally biased toward acidic residues. A coiled-coil region spans residues 65 to 122 (ADNELESLMSLVNDNNNNNNNTSGIDDDNNNDIDDNNNNNNNNNNNNNNNNNNKEGLN). A compositionally biased stretch (low complexity) spans 77 to 88 (NDNNNNNNNTSG). Acidic residues predominate over residues 89–99 (IDDDNNNDIDD). The segment covering 100 to 117 (NNNNNNNNNNNNNNNNNN) has biased composition (low complexity). The segment covering 146–158 (SHASVSNQSSNGS) has biased composition (polar residues). Low complexity-rich tracts occupy residues 220-234 (SCHN…NKNN), 244-254 (NINNNNNNNCN), and 316-387 (NYNN…PPNQ). A coiled-coil region spans residues 450–516 (KIDNLNKNIN…NNNNNIQDIQ (67 aa)). Polar residues predominate over residues 466–481 (TDSQQPLPSIDVNFSH). The span at 482–511 (NNNNNNNDNDNNNNNNNNNNNNNNNNNNNN) shows a compositional bias: low complexity. Residues 525–538 (DYNIQEGNDINNDN) are compositionally biased toward polar residues. Composition is skewed to low complexity over residues 552–561 (SSNNNNNNNS) and 613–639 (NNNN…TTTT). The PPM-type phosphatase domain maps to 744-1005 (DINKRGLKRA…DNISIIVVTL (262 aa)). Residues Asp784, Gly785, Asp956, and Asp996 each contribute to the Mn(2+) site.

This sequence in the C-terminal section; belongs to the PP2C family. Mg(2+) is required as a cofactor. It depends on Mn(2+) as a cofactor.

It catalyses the reaction O-phospho-L-seryl-[protein] + H2O = L-seryl-[protein] + phosphate. It carries out the reaction O-phospho-L-threonyl-[protein] + H2O = L-threonyl-[protein] + phosphate. The protein is Probable protein phosphatase DDB_G0279461 of Dictyostelium discoideum (Social amoeba).